Reading from the N-terminus, the 206-residue chain is MASGKFITFEGIDGAGKTTHLQWFCERLQGKLAAAGRQVVVTREPGGTQLGEKLREILLNQPMDLETEALLMFAARREHLALVIEPALARGDWVVSDRFTDATFAYQGGGRGLPRDKLETLERWVQGGFQPDLTVLFDVAPQVASERRGAARMPDKFESESDAFFSRTRSEYLRRAEEAPHRFAIVDATQTIPEIRHQLERVLAAL.

Position 11–18 (11–18) interacts with ATP; it reads GIDGAGKT.

Belongs to the thymidylate kinase family.

The enzyme catalyses dTMP + ATP = dTDP + ADP. Its function is as follows. Phosphorylation of dTMP to form dTDP in both de novo and salvage pathways of dTTP synthesis. This is Thymidylate kinase from Burkholderia lata (strain ATCC 17760 / DSM 23089 / LMG 22485 / NCIMB 9086 / R18194 / 383).